Consider the following 191-residue polypeptide: Thymidylate kinase (191 aa).

Position 7–14 (G7–S14) interacts with ATP.

The protein belongs to the thymidylate kinase family.

It catalyses the reaction dTMP + ATP = dTDP + ADP. Its function is as follows. Phosphorylation of dTMP to form dTDP in both de novo and salvage pathways of dTTP synthesis. The chain is Thymidylate kinase from Helicobacter pylori (strain Shi470).